We begin with the raw amino-acid sequence, 434 residues long: Nicotinate phosphoribosyltransferase (434 aa).

His-242 bears the Phosphohistidine; by autocatalysis mark.

The protein belongs to the NAPRTase family. In terms of processing, transiently phosphorylated on a His residue during the reaction cycle. Phosphorylation strongly increases the affinity for substrates and increases the rate of nicotinate D-ribonucleotide production. Dephosphorylation regenerates the low-affinity form of the enzyme, leading to product release.

It carries out the reaction nicotinate + 5-phospho-alpha-D-ribose 1-diphosphate + ATP + H2O = nicotinate beta-D-ribonucleotide + ADP + phosphate + diphosphate. It functions in the pathway cofactor biosynthesis; NAD(+) biosynthesis; nicotinate D-ribonucleotide from nicotinate: step 1/1. Catalyzes the synthesis of beta-nicotinate D-ribonucleotide from nicotinate and 5-phospho-D-ribose 1-phosphate at the expense of ATP. This is Nicotinate phosphoribosyltransferase from Sinorhizobium fredii (strain NBRC 101917 / NGR234).